The following is a 667-amino-acid chain: MTAFQLQAPFQPTGDQPAAIDQLVDSLQNQHRFQTLLGATGTGKTFTIAAVIEKIGRPTLVLAHNKTLAAQLCNELRQFFPNNAVEYFISYYDYYQPEAYIPVSDTYIEKSSSINDEIDMLRHSATRSLFERRDVIVVASISCIYGLGMPAEYLKAAISLTVGQEFDQRQLLRALVSVQYNRNDLELTRGRFRLKGDILEIVPAYEDRVIKIDFFGDEIESIRYLDPLTGEVLQKLERISIYPARHFVTPEERLEVACRDIKTELDNRLLELEKAGKLLEAQRLDQRTRYDLEMLQEVGYCNGVENYSRHLAGRLAGEPPECLVDYFPEDWLLVVDESHVSVPQIRGMYNGDQSRKKVLIDHGFRLPSAADNRPLKSEEFWQKVNQCIFVSATPGDWELEQSENRIVEQIIRPTGVLDPEIFVRPTEGQVDDLLGEIKERVQLNERVLITTLTKRMAEDLTEYLQERGIKVRYLHSEIQSIQRIEIIQDLREGVFDVLIGVNLLREGLDLPEVSLVAILDADKEGFLRATRSLIQTIGRAARHIRGQAILYGDNLTDSMINAIEETKRRRAIQQEYNQKHGIIPQPIVKRSSNSILAFLDISRRLNSQQLEQVCENIEELSLEQIPELIQQLEAQMKEAAKNLEFESAAKYRDRIKQLRDKLLNHVR.

Residues 25-180 (DSLQNQHRFQ…LLRALVSVQY (156 aa)) form the Helicase ATP-binding domain. 38–45 (GATGTGKT) is a binding site for ATP. The Beta-hairpin motif lies at 91–114 (YYDYYQPEAYIPVSDTYIEKSSSI). One can recognise a Helicase C-terminal domain in the interval 429–595 (QVDDLLGEIK…PIVKRSSNSI (167 aa)). The region spanning 626-661 (PELIQQLEAQMKEAAKNLEFESAAKYRDRIKQLRDK) is the UVR domain.

This sequence belongs to the UvrB family. In terms of assembly, forms a heterotetramer with UvrA during the search for lesions. Interacts with UvrC in an incision complex.

The protein resides in the cytoplasm. Its function is as follows. The UvrABC repair system catalyzes the recognition and processing of DNA lesions. A damage recognition complex composed of 2 UvrA and 2 UvrB subunits scans DNA for abnormalities. Upon binding of the UvrA(2)B(2) complex to a putative damaged site, the DNA wraps around one UvrB monomer. DNA wrap is dependent on ATP binding by UvrB and probably causes local melting of the DNA helix, facilitating insertion of UvrB beta-hairpin between the DNA strands. Then UvrB probes one DNA strand for the presence of a lesion. If a lesion is found the UvrA subunits dissociate and the UvrB-DNA preincision complex is formed. This complex is subsequently bound by UvrC and the second UvrB is released. If no lesion is found, the DNA wraps around the other UvrB subunit that will check the other stand for damage. This is UvrABC system protein B from Microcystis aeruginosa (strain NIES-843 / IAM M-2473).